The following is a 447-amino-acid chain: Adenylosuccinate synthetase (447 aa).

Residues 12-18 (GDEGKGK) and 40-42 (GHT) contribute to the GTP site. Residue D13 is the Proton acceptor of the active site. The Mg(2+) site is built by D13 and G40. Residues 13–16 (DEGK), 38–41 (NAGH), T128, R142, Q223, T238, and R302 contribute to the IMP site. The active-site Proton donor is H41. 298 to 304 (TTTGRRR) provides a ligand contact to substrate. Residues R304, 330–332 (KLD), and 412–414 (SLG) each bind GTP.

Belongs to the adenylosuccinate synthetase family. Homodimer. The cofactor is Mg(2+).

It localises to the cytoplasm. It carries out the reaction IMP + L-aspartate + GTP = N(6)-(1,2-dicarboxyethyl)-AMP + GDP + phosphate + 2 H(+). It functions in the pathway purine metabolism; AMP biosynthesis via de novo pathway; AMP from IMP: step 1/2. Functionally, plays an important role in the de novo pathway of purine nucleotide biosynthesis. Catalyzes the first committed step in the biosynthesis of AMP from IMP. This is Adenylosuccinate synthetase from Microcystis aeruginosa (strain NIES-843 / IAM M-2473).